Reading from the N-terminus, the 280-residue chain is Ribosomal RNA small subunit methyltransferase A (280 aa).

S-adenosyl-L-methionine contacts are provided by asparagine 28, leucine 30, glycine 55, glutamate 77, aspartate 103, and asparagine 122.

The protein belongs to the class I-like SAM-binding methyltransferase superfamily. rRNA adenine N(6)-methyltransferase family. RsmA subfamily.

The protein localises to the cytoplasm. It carries out the reaction adenosine(1518)/adenosine(1519) in 16S rRNA + 4 S-adenosyl-L-methionine = N(6)-dimethyladenosine(1518)/N(6)-dimethyladenosine(1519) in 16S rRNA + 4 S-adenosyl-L-homocysteine + 4 H(+). Specifically dimethylates two adjacent adenosines (A1518 and A1519) in the loop of a conserved hairpin near the 3'-end of 16S rRNA in the 30S particle. May play a critical role in biogenesis of 30S subunits. The sequence is that of Ribosomal RNA small subunit methyltransferase A from Roseobacter denitrificans (strain ATCC 33942 / OCh 114) (Erythrobacter sp. (strain OCh 114)).